The chain runs to 142 residues: Hemoglobin subunit alpha (142 aa).

Position 1 is an N-acetylserine (Ser-1). A Globin domain is found at 1 to 142 (SLSDKDKAAV…VALALAERYR (142 aa)). His-59 is a binding site for O2. His-88 is a heme b binding site.

The protein belongs to the globin family. In terms of assembly, hb1 is a heterotetramer of two alpha chains and two beta chains. HbC is a heterotetramer of two alpha chains and two beta-C chains. In terms of tissue distribution, red blood cells.

Functionally, involved in oxygen transport from gills to the various peripheral tissues. This is Hemoglobin subunit alpha (hba) from Trematomus bernacchii (Emerald rockcod).